A 205-amino-acid polypeptide reads, in one-letter code: MKALTARQQQVYDLVRDHISQTGMPPTRAEIAASLGFRSPNAAEEHLKALARKGVIEIVSGASRGIRLLLEEETEDQGLPLIGRVAAGEPLLAQEHIESHYQVDPELFKPHADFLLRVNGMSMKDIGIMDGDLLAVHKTQNVHNGQVVVARIEDEVTVKRFKQQGNRVELIAENPEFEPIVVDLRQQNFTIEGLAVGVIRNSDWY.

The H-T-H motif DNA-binding region spans Arg-28 to Lys-48. Residues Ser-122 and Lys-159 each act as for autocatalytic cleavage activity in the active site.

Belongs to the peptidase S24 family. In terms of assembly, homodimer.

The enzyme catalyses Hydrolysis of Ala-|-Gly bond in repressor LexA.. Represses a number of genes involved in the response to DNA damage (SOS response), including recA and lexA. Binds to the 16 bp palindromic sequence 5'-CTGTATATATATACAG-3'. In the presence of single-stranded DNA, RecA interacts with LexA causing an autocatalytic cleavage which disrupts the DNA-binding part of LexA, leading to derepression of the SOS regulon and eventually DNA repair. This chain is LexA repressor, found in Providencia rettgeri.